Consider the following 68-residue polypeptide: MMFRLTSVSCFLLVIVCLNLFQVVLTRRCFPPGTFCSRYLPCCSGRCCSGWCTRRCFPRFGKRATFQE.

The first 26 residues, 1-26 (MMFRLTSVSCFLLVIVCLNLFQVVLT), serve as a signal peptide directing secretion. Intrachain disulfides connect C29/C43, C36/C48, C42/C52, and C47/C56. The residue at position 60 (F60) is a Phenylalanine amide. A propeptide spanning residues 64-68 (ATFQE) is cleaved from the precursor.

The protein belongs to the conotoxin I2 superfamily. In terms of tissue distribution, expressed by the venom duct.

Its subcellular location is the secreted. This Conus eburneus (Ivory cone) protein is Conotoxin Eb11.7.